Reading from the N-terminus, the 492-residue chain is N-succinylglutamate 5-semialdehyde dehydrogenase (492 aa).

220–225 provides a ligand contact to NAD(+); the sequence is GSASTG. Catalysis depends on residues Glu243 and Cys277.

The protein belongs to the aldehyde dehydrogenase family. AstD subfamily.

It carries out the reaction N-succinyl-L-glutamate 5-semialdehyde + NAD(+) + H2O = N-succinyl-L-glutamate + NADH + 2 H(+). Its pathway is amino-acid degradation; L-arginine degradation via AST pathway; L-glutamate and succinate from L-arginine: step 4/5. Catalyzes the NAD-dependent reduction of succinylglutamate semialdehyde into succinylglutamate. In Salmonella paratyphi B (strain ATCC BAA-1250 / SPB7), this protein is N-succinylglutamate 5-semialdehyde dehydrogenase.